We begin with the raw amino-acid sequence, 273 residues long: HLA class II histocompatibility antigen, DO beta chain (273 aa).

A signal peptide spans 1–26 (MGSGWVPWVVALLVNLTRLDSSMTQG). A beta-1 region spans residues 27-120 (TDSPEDFVIQ…LGAPFTVGRK (94 aa)). The Extracellular portion of the chain corresponds to 27 to 224 (TDSPEDFVIQ…RAQSEYSWRK (198 aa)). 2 disulfide bridges follow: Cys41–Cys105 and Cys143–Cys199. Residue Asn45 is glycosylated (N-linked (GlcNAc...) asparagine). Residues 121–214 (VQPEVTVYPE…SLLSPVSVEW (94 aa)) are beta-2. The 91-residue stretch at 123–213 (PEVTVYPERT…SSLLSPVSVE (91 aa)) folds into the Ig-like C1-type domain. Positions 215 to 224 (RAQSEYSWRK) are connecting peptide. A helical membrane pass occupies residues 225-245 (MLSGIAAFLLGLIFLLVGIVI). Over 246–273 (QLRAQKGYVRTQMSGNEVSRAVLLPQSC) the chain is Cytoplasmic.

It belongs to the MHC class II family. Heterodimer of an alpha chain (DOA) and a beta chain (DOB). Forms a heterotetrameric complex with an HLA-DM molecule during intracellular transport in endosomal/lysosomal compartments in B-cells.

It localises to the endosome membrane. The protein localises to the lysosome membrane. Functionally, important modulator in the HLA class II restricted antigen presentation pathway by interaction with the HLA-DM molecule in B-cells. Modifies peptide exchange activity of HLA-DM. The sequence is that of HLA class II histocompatibility antigen, DO beta chain (HLA-DOB) from Homo sapiens (Human).